A 197-amino-acid chain; its full sequence is Phosphoheptose isomerase (197 aa).

Residues 34 to 196 enclose the SIS domain; the sequence is MVNCLLGGNK…DRTLFPQDEQ (163 aa). 49–51 contributes to the substrate binding site; that stretch reads NGG. Positions 58 and 62 each coordinate Zn(2+). Residues Glu-62, 91-92, 117-119, Ser-122, and Gln-172 each bind substrate; these read ND and STS. Zn(2+) is bound by residues Gln-172 and His-180.

Belongs to the SIS family. GmhA subfamily. Homotetramer. Zn(2+) is required as a cofactor.

It is found in the cytoplasm. The catalysed reaction is 2 D-sedoheptulose 7-phosphate = D-glycero-alpha-D-manno-heptose 7-phosphate + D-glycero-beta-D-manno-heptose 7-phosphate. Its pathway is carbohydrate biosynthesis; D-glycero-D-manno-heptose 7-phosphate biosynthesis; D-glycero-alpha-D-manno-heptose 7-phosphate and D-glycero-beta-D-manno-heptose 7-phosphate from sedoheptulose 7-phosphate: step 1/1. Functionally, catalyzes the isomerization of sedoheptulose 7-phosphate in D-glycero-D-manno-heptose 7-phosphate. This is Phosphoheptose isomerase from Shewanella pealeana (strain ATCC 700345 / ANG-SQ1).